Consider the following 764-residue polypeptide: Phenylalanine--tRNA ligase beta subunit (764 aa).

In terms of domain architecture, tRNA-binding spans 38–148; it reads CIAPKNVVVG…GELVLGKELH (111 aa). The B5 domain occupies 375 to 455; it reads LKDCALTFQL…RFVGIDNLVS (81 aa). Mg(2+)-binding residues include D433, D439, E442, and E443. The FDX-ACB domain maps to 673 to 763; that stretch reads SIYPSSVRDL…LEKEFNARLK (91 aa).

The protein belongs to the phenylalanyl-tRNA synthetase beta subunit family. Type 1 subfamily. Tetramer of two alpha and two beta subunits. Mg(2+) serves as cofactor.

The protein localises to the cytoplasm. The enzyme catalyses tRNA(Phe) + L-phenylalanine + ATP = L-phenylalanyl-tRNA(Phe) + AMP + diphosphate + H(+). This is Phenylalanine--tRNA ligase beta subunit (pheT) from Helicobacter pylori (strain J99 / ATCC 700824) (Campylobacter pylori J99).